The following is a 408-amino-acid chain: MSFDRQLTEDQEVVLKQIWTHLFHLWQVPVDGTHIFPNNSLHSSSTPAKKKKSSWFSKLQSSDHTQDSSEAAEAAHLYEKGKIHKALANLDPQTTKKQFWHDIKNETPDATILKFIRARKWNADKTIAMLGHDLYWRKDTINKIINGGERAVYENNETGVIKNLELQKATIQGYDNDMRPVILVRPRLHHSSDQTEQELEKFSLLVIEQSKLFFKENYPASTTILFDLNGFSMSNMDYAPVKFLITCFEAHYPESLGHLLIHKAPWIFNPIWNIIKNWLDPVVASKIVFTKNIDELHKFIQPQYIPRYLGGENDNDLDHYTPPDGSLDVHLKDTETRAMIEKEREELVEQFLTVTAQWIEHQPLNDPAYIQLQEKRVQLSTALCENYSKLDPYIRSRSVYDYNGSLKV.

At Ser-2 the chain carries N-acetylserine. At Ser-2 the chain carries Phosphoserine. In terms of domain architecture, CRAL-TRIO spans 157–317; that stretch reads ETGVIKNLEL…YLGGENDNDL (161 aa).

Belongs to the PITP family. In terms of assembly, forms a complex with 2 TSA2 subunits. Binds phosphatidylinositol (PtdIns).

The protein resides in the cytoplasm. It localises to the microsome. Its subcellular location is the endosome. The enzyme catalyses a 1,2-diacyl-sn-glycero-3-phospho-(1D-myo-inositol)(in) = a 1,2-diacyl-sn-glycero-3-phospho-(1D-myo-inositol)(out). Non-classical phosphatidylinositol (PtdIns) transfer protein (PITP), which exhibits PtdIns-binding/transfer activity in the absence of detectable PtdCho-binding/transfer activity. Activates SPO14/PLD1 (phospholipase D1) by stimulating phosphoinositide synthesis via the STT4 PtdIns 4-kinase. Modulates ArfGAP function through effects on SPO14 activity. Inhibits phosphatidylcholine degradation by PLB1 (phospholipase B1). May also regulate post-Golgi membrane-trafficking events and have a role resistance to oxidative stress. Inhibits fatty acid synthase activity in response to heme depletion and oleic acid starvation, preventing saturated fatty acid (SFA) accumulation. The polypeptide is Phosphatidylinositol transfer protein CSR1 (CSR1) (Saccharomyces cerevisiae (strain ATCC 204508 / S288c) (Baker's yeast)).